An 809-amino-acid chain; its full sequence is LPS-assembly protein LptD (809 aa).

The N-terminal stretch at 1–22 (MRRALRLLPLPLSIAICLPAMA) is a signal peptide.

Belongs to the LptD family. Component of the lipopolysaccharide transport and assembly complex. Interacts with LptE and LptA.

The protein resides in the cell outer membrane. In terms of biological role, together with LptE, is involved in the assembly of lipopolysaccharide (LPS) at the surface of the outer membrane. The protein is LPS-assembly protein LptD of Xanthomonas euvesicatoria pv. vesicatoria (strain 85-10) (Xanthomonas campestris pv. vesicatoria).